The chain runs to 170 residues: Small ribosomal subunit protein uS9 (170 aa).

The interval 1-47 (MAETTPEQPLEEIDIDSYTTESEVPVEGEYTSESMASAFGEPQPAAG) is disordered.

Belongs to the universal ribosomal protein uS9 family.

The chain is Small ribosomal subunit protein uS9 (rpsI) from Streptomyces coelicolor (strain ATCC BAA-471 / A3(2) / M145).